Reading from the N-terminus, the 602-residue chain is Cholinesterase (602 aa).

Residues M1–T28 form the signal peptide. N-linked (GlcNAc...) asparagine glycosylation occurs at N85. C93 and C120 are oxidised to a cystine. N134 is a glycosylation site (N-linked (GlcNAc...) asparagine). G144–G145 contributes to the substrate binding site. S226 serves as the catalytic Acyl-ester intermediate. S226 is subject to Phosphoserine. Residues N269 and N284 are each glycosylated (N-linked (GlcNAc...) asparagine). C280 and C291 are oxidised to a cystine. E353 (charge relay system) is an active-site residue. N-linked (GlcNAc...) asparagine glycosylation occurs at N369. A disulfide bridge links C428 with C547. The active-site Charge relay system is H466. N-linked (GlcNAc...) asparagine glycosylation is found at N483, N509, N513, and N514.

The protein belongs to the type-B carboxylesterase/lipase family. In terms of assembly, homotetramer; disulfide-linked. Dimer of dimers.

It is found in the secreted. It carries out the reaction an acylcholine + H2O = a carboxylate + choline + H(+). Esterase with broad substrate specificity. Contributes to the inactivation of the neurotransmitter acetylcholine. Can degrade neurotoxic organophosphate esters. This chain is Cholinesterase (BCHE), found in Panthera tigris tigris (Bengal tiger).